A 291-amino-acid chain; its full sequence is Syntaxin-1A homolog (291 aa).

Residues 1–24 (MTKDRLSALKAAQSEDEQDDDMHM) are disordered. Over 1–266 (MTKDRLSALK…QYQSKARRKK (266 aa)) the chain is Cytoplasmic. The stretch at 69 to 95 (NDQKTKEELDELMAVIKRAANKVRGKL) forms a coiled coil. In terms of domain architecture, t-SNARE coiled-coil homology spans 193-255 (LADIEARHND…DRAVADTKKA (63 aa)). The chain crosses the membrane as a helical; Anchor for type IV membrane protein span at residues 267-287 (ICILVTGVILITGLIIFILFY). Over 288 to 291 (AKVL) the chain is Extracellular.

Belongs to the syntaxin family. As to quaternary structure, interacts (via N-terminus, in open or in closed conformation) with unc-18; the interaction is direct. Interaction in open conformation with unc-18 promotes synaptic vesicle docking and tethering. Interaction via N-terminus with unc-18 mediates the secretion of the neurotransmitter acetylcholine from cholinergic motor neurons. Interaction with unc-18 is reduced in the presence of unc-13. As to expression, expressed throughout the head ganglion, nerve ring, ventral cord, dorsal cord, intestine, vulva and spermatheca.

The protein resides in the cell membrane. The protein localises to the cell projection. It is found in the axon. It localises to the dendrite. Its subcellular location is the perikaryon. Its function is as follows. Plays a critical role in several secretory processes, including cuticle secretion and neurotransmitter release, and probably assists in neuronal membrane maturation or the final stages of neuronal differentiation. Plays a role in synaptic vesicle docking and tethering through its association with unc-18. Through binding to unc-18 mediates the release of the neurotransmitter acetylcholine from cholinergic motor neurons, and thereby promotes locomotory behaviors. Essential for embryonic viability and development. Has a role in dauer formation and adult life span. Required for locomotion. Probably by regulating neuronal transmission downstream of lin-3 and receptor lin-23 and phospholipase plc-3 and upstream of innexin unc-7 and egl-4/PKG in ALA neurons, involved in the decrease in pharyngeal pumping during the quiescent state that precedes each larval molt. The polypeptide is Syntaxin-1A homolog (Caenorhabditis elegans).